A 716-amino-acid polypeptide reads, in one-letter code: Fatty acid oxidation complex subunit alpha (716 aa).

The enoyl-CoA hydratase/isomerase stretch occupies residues 1-189 (MIYQSPTIQV…KVGAVDAVVA (189 aa)). Residue Asp-296 participates in substrate binding. The segment at 311–716 (KEVNNAAVLG…AANNGSYYQA (406 aa)) is 3-hydroxyacyl-CoA dehydrogenase. NAD(+)-binding positions include Met-324, Asp-343, 400-402 (VVE), Lys-407, and Ser-429. His-450 acts as the For 3-hydroxyacyl-CoA dehydrogenase activity in catalysis. Position 453 (Asn-453) interacts with NAD(+). Positions 500 and 660 each coordinate substrate.

This sequence in the N-terminal section; belongs to the enoyl-CoA hydratase/isomerase family. It in the C-terminal section; belongs to the 3-hydroxyacyl-CoA dehydrogenase family. In terms of assembly, heterotetramer of two alpha chains (FadB) and two beta chains (FadA).

The enzyme catalyses a (3S)-3-hydroxyacyl-CoA + NAD(+) = a 3-oxoacyl-CoA + NADH + H(+). It catalyses the reaction a (3S)-3-hydroxyacyl-CoA = a (2E)-enoyl-CoA + H2O. The catalysed reaction is a 4-saturated-(3S)-3-hydroxyacyl-CoA = a (3E)-enoyl-CoA + H2O. It carries out the reaction (3S)-3-hydroxybutanoyl-CoA = (3R)-3-hydroxybutanoyl-CoA. The enzyme catalyses a (3Z)-enoyl-CoA = a 4-saturated (2E)-enoyl-CoA. It catalyses the reaction a (3E)-enoyl-CoA = a 4-saturated (2E)-enoyl-CoA. It participates in lipid metabolism; fatty acid beta-oxidation. Functionally, involved in the aerobic and anaerobic degradation of long-chain fatty acids via beta-oxidation cycle. Catalyzes the formation of 3-oxoacyl-CoA from enoyl-CoA via L-3-hydroxyacyl-CoA. It can also use D-3-hydroxyacyl-CoA and cis-3-enoyl-CoA as substrate. The chain is Fatty acid oxidation complex subunit alpha from Shewanella baltica (strain OS155 / ATCC BAA-1091).